A 1466-amino-acid polypeptide reads, in one-letter code: Adhesion G protein-coupled receptor L1 (1466 aa).

An N-terminal signal peptide occupies residues 1-28; the sequence is MARLAAALWSLCVTTVLVTSATQGLSRA. At 29 to 852 the chain is on the extracellular side; that stretch reads GLPFGLMRRE…EIYQGRINEL (824 aa). The SUEL-type lectin domain occupies 40–129; it reads ACEGYPIELR…KYLEVQYDCV (90 aa). 5 disulfide bridges follow: Cys-41/Cys-71, Cys-50/Cys-128, Cys-83/Cys-115, Cys-96/Cys-102, and Cys-135/Cys-317. Residue Glu-42 participates in alpha-L-rhamnose binding. The N-linked (GlcNAc...) asparagine glycan is linked to Asn-98. An alpha-L-rhamnose-binding site is contributed by 117–120; that stretch reads GTYK. The Olfactomedin-like domain occupies 134 to 393; it reads VCPGTLQKVL…VVRYSLEFGP (260 aa). Residues 395 to 463 are disordered; it reads DPSAGPATSP…APAPSTRRPP (69 aa). The span at 400–436 shows a compositional bias: low complexity; that stretch reads PATSPPLSTTTTARPTPLTSTASPAATTPLRRAPLTT. Positions 448 to 463 are enriched in pro residues; that stretch reads DLPPATAPAPSTRRPP. Disulfide bonds link Cys-475–Cys-510 and Cys-498–Cys-527. N-linked (GlcNAc...) asparagine glycosylation is found at Asn-526, Asn-635, Asn-736, Asn-795, Asn-800, and Asn-821. The 182-residue stretch at 664-845 folds into the GAIN-B domain; it reads PARFLAAKQN…AVLMAHREIY (182 aa). Disulfide bonds link Cys-796/Cys-827 and Cys-815/Cys-829. Residues 796-845 are GPS; sequence CSFWNYSERSMLGYWSTQGCRLVESNKTHTTCACSHLTNFAVLMAHREIY. The chain crosses the membrane as a helical span at residues 853–873; it reads LLSVITWVGIVISLVCLAICI. Topologically, residues 874 to 887 are cytoplasmic; the sequence is STFCFLRGLQTDRN. A helical transmembrane segment spans residues 888–908; it reads TIHKNLCINLFLAELLFLVGI. The Extracellular segment spans residues 909-914; it reads DKTQYE. A helical transmembrane segment spans residues 915–935; the sequence is VACPIFAGLLHYFFLAAFSWL. Topologically, residues 936–958 are cytoplasmic; that stretch reads CLEGVHLYLLLVEVFESEYSRTK. A helical transmembrane segment spans residues 959–979; it reads YYYLGGYCFPALVVGIAAAID. Residues 980 to 996 lie on the Extracellular side of the membrane; it reads YRSYGTEKACWLRVDNY. Residues 997-1017 traverse the membrane as a helical segment; the sequence is FIWSFIGPVSFVIVVNLVFLM. Residues 1018–1044 lie on the Cytoplasmic side of the membrane; it reads VTLHKMIRSSSVLKPDSSRLDNIKSWA. The chain crosses the membrane as a helical span at residues 1045–1065; that stretch reads LGAIALLFLLGLTWAFGLLFI. The Extracellular portion of the chain corresponds to 1066–1069; sequence NKES. A helical membrane pass occupies residues 1070–1090; the sequence is VVMAYLFTTFNAFQGVFIFVF. Residues 1091–1466 lie on the Cytoplasmic side of the membrane; that stretch reads HCALQKKVHK…DGQMQLVTSL (376 aa). Position 1188 is an omega-N-methylarginine (Arg-1188). Ser-1214 is subject to Phosphoserine. Disordered stretches follow at residues 1242–1267, 1288–1319, 1352–1421, and 1443–1466; these read FNNSYSLRSGDFPPGDGGPEPPRGRN, RGASGGAKGPPPEPPVPPVPGVSEDEAGGPGS, ESES…SRPP, and YLAAPSLEGPGPDGDGQMQLVTSL. Residues 1296–1307 show a composition bias toward pro residues; the sequence is GPPPEPPVPPVP. Ser-1319 is modified (phosphoserine). Pro residues predominate over residues 1400-1412; it reads ALPPPPPAPPGPP. Phosphoserine occurs at positions 1448 and 1465.

The protein belongs to the G-protein coupled receptor 2 family. Adhesion G-protein coupled receptor (ADGR) subfamily. In terms of assembly, forms a heterodimer, consisting of a large extracellular region (p120) non-covalently linked to a seven-transmembrane moiety (p85). Interacts with syntaxin and with proteins of the SHANK family via the PDZ domain. Interacts (via extracellular domain) with FLRT1, FLRT2 and FLRT3 (via extracellular domain). Post-translationally, autoproteolytically cleaved into 2 subunits, an extracellular subunit and a seven-transmembrane subunit. This proteolytic processing takes place early in the biosynthetic pathway, either in the endoplasmic reticulum or in the early compartment of the Golgi apparatus.

The protein localises to the cell membrane. It localises to the cell projection. It is found in the axon. The protein resides in the growth cone. Its subcellular location is the synapse. The protein localises to the presynaptic cell membrane. It localises to the synaptosome. Functionally, calcium-independent receptor of high affinity for alpha-latrotoxin, an excitatory neurotoxin present in black widow spider venom which triggers massive exocytosis from neurons and neuroendocrine cells. Receptor for TENM2 that mediates heterophilic synaptic cell-cell contact and postsynaptic specialization. Receptor probably implicated in the regulation of exocytosis. The sequence is that of Adhesion G protein-coupled receptor L1 from Mus musculus (Mouse).